Consider the following 445-residue polypeptide: Glutamyl-tRNA(Gln) amidotransferase subunit D (445 aa).

An Asparaginase/glutaminase domain is found at 93-425; that stretch reads SEIKIISTGG…EKIRSLMISN (333 aa). Residues T103, T179, D180, and K258 contribute to the active site.

The protein belongs to the asparaginase 1 family. GatD subfamily. Heterodimer of GatD and GatE.

The enzyme catalyses L-glutamyl-tRNA(Gln) + L-glutamine + ATP + H2O = L-glutaminyl-tRNA(Gln) + L-glutamate + ADP + phosphate + H(+). Its function is as follows. Allows the formation of correctly charged Gln-tRNA(Gln) through the transamidation of misacylated Glu-tRNA(Gln) in organisms which lack glutaminyl-tRNA synthetase. The reaction takes place in the presence of glutamine and ATP through an activated gamma-phospho-Glu-tRNA(Gln). The GatDE system is specific for glutamate and does not act on aspartate. This Saccharolobus islandicus (strain Y.N.15.51 / Yellowstone #2) (Sulfolobus islandicus) protein is Glutamyl-tRNA(Gln) amidotransferase subunit D.